The following is a 356-amino-acid chain: Core protein VP7 (356 aa).

A glycan (N-linked (GlcNAc...) asparagine; by host) is linked at asparagine 41.

Belongs to the orbivirus VP7 family.

Its subcellular location is the virion. Its function is as follows. The VP7 protein is one of the five proteins (with VP1, VP3, VP4, and VP6) which form the inner capsid of the virus. This is Core protein VP7 (Segment-7) from Broadhaven virus (BRD).